Here is a 181-residue protein sequence, read N- to C-terminus: ATP-dependent protease subunit HslV (181 aa).

Threonine 7 is an active-site residue. Residues alanine 166, cysteine 169, and threonine 172 each coordinate Na(+).

Belongs to the peptidase T1B family. HslV subfamily. A double ring-shaped homohexamer of HslV is capped on each side by a ring-shaped HslU homohexamer. The assembly of the HslU/HslV complex is dependent on binding of ATP.

The protein localises to the cytoplasm. The enzyme catalyses ATP-dependent cleavage of peptide bonds with broad specificity.. Allosterically activated by HslU binding. Functionally, protease subunit of a proteasome-like degradation complex believed to be a general protein degrading machinery. This Anaeromyxobacter dehalogenans (strain 2CP-C) protein is ATP-dependent protease subunit HslV.